Consider the following 299-residue polypeptide: Prohibitin-2 (299 aa).

A2 bears the N-acetylalanine mark. The interval M19 to A49 is necessary for transcriptional repression. Y128 is subject to Phosphotyrosine. The residue at position 147 (K147) is an N6-acetyllysine. Residues A150–D174 form a necessary for transcriptional repression region. S151 is modified (phosphoserine). Residues S190–L238 are a coiled coil. Residues K200, K236, K250, and K262 each carry the N6-acetyllysine modification.

This sequence belongs to the prohibitin family. In terms of assembly, the mitochondrial prohibitin complex consists of two subunits (PHB1 and PHB2), assembled into a membrane-associated ring-shaped supercomplex of approximately 1 mDa. Interacts with ESR1, HDAC1 and HDAC5. Interacts with ZNF703. Interacts with STOML2. Interacts with ARFGEF3. Interacts with SPHK2. Interacts with COX4I1; the interaction associates PHB2 with COX. Interacts with MAP1LC3B (membrane-bound form LC3-II); the interaction is direct and upon mitochondrial depolarization and proteasome-dependent outer membrane rupture. Interacts with IGFBP6 (via C-terminal domain). Interacts with CLPB. Interacts with CD86 (via cytoplasmic domain); the interactions increases after priming with CD40. Interacts with AFG3L2. Interacts with DNAJC19. Interacts with AKT2; this interaction may be important for myogenic differentiation. Post-translationally, phosphorylated. Tyrosine phosphorylation is indirectly stimulated by IGFBP6. As to expression, widely expressed in different tissues.

It localises to the mitochondrion inner membrane. Its subcellular location is the cytoplasm. The protein localises to the nucleus. The protein resides in the cell membrane. In terms of biological role, protein with pleiotropic attributes mediated in a cell-compartment- and tissue-specific manner, which include the plasma membrane-associated cell signaling functions, mitochondrial chaperone, and transcriptional co-regulator of transcription factors and sex steroid hormones in the nucleus. In the mitochondria, together with PHB, forms large ring complexes (prohibitin complexes) in the inner mitochondrial membrane (IMM) and functions as a chaperone protein that stabilizes mitochondrial respiratory enzymes and maintains mitochondrial integrity in the IMM, which is required for mitochondrial morphogenesis, neuronal survival, and normal lifespan. The prohibitin complex, with DNAJC19, regulates cardiolipin remodeling and the protein turnover of OMA1 in a cardiolipin-binding manner. Also regulates cytochrome-c oxidase assembly (COX) and mitochondrial respiration. Binding to sphingoid 1-phosphate (SPP) modulates its regulator activity. Has a key role of mitophagy receptor involved in targeting mitochondria for autophagic degradation. Involved in mitochondrial-mediated antiviral innate immunity, activates RIG-I-mediated signal transduction and production of IFNB1 and pro-inflammatory cytokine IL6. Its function is as follows. In the nucleus, serves as transcriptional co-regulator. Acts as a mediator of transcriptional repression by nuclear hormone receptors via recruitment of histone deacetylases. Functions as an estrogen receptor (ER)-selective coregulator that potentiates the inhibitory activities of antiestrogens and represses the activity of estrogens. Competes with NCOA1 for modulation of ER transcriptional activity. Functionally, in the plasma membrane, is involved in IGFBP6-induced cell migration. Cooperates with CD86 to mediate CD86-signaling in B lymphocytes that regulates the level of IgG1 produced through the activation of distal signaling intermediates. Upon CD40 engagement, required to activate NF-kappa-B signaling pathway via phospholipase C and protein kinase C activation. The sequence is that of Prohibitin-2 from Mus musculus (Mouse).